Reading from the N-terminus, the 331-residue chain is Methionyl-tRNA formyltransferase (331 aa).

110–113 provides a ligand contact to (6S)-5,6,7,8-tetrahydrofolate; sequence SLLP. Residues 312-331 form a disordered region; that stretch reads HAPAERVSAAGSPAGAGGAP.

This sequence belongs to the Fmt family.

It catalyses the reaction L-methionyl-tRNA(fMet) + (6R)-10-formyltetrahydrofolate = N-formyl-L-methionyl-tRNA(fMet) + (6S)-5,6,7,8-tetrahydrofolate + H(+). In terms of biological role, attaches a formyl group to the free amino group of methionyl-tRNA(fMet). The formyl group appears to play a dual role in the initiator identity of N-formylmethionyl-tRNA by promoting its recognition by IF2 and preventing the misappropriation of this tRNA by the elongation apparatus. The chain is Methionyl-tRNA formyltransferase from Frankia alni (strain DSM 45986 / CECT 9034 / ACN14a).